The sequence spans 379 residues: Flap endonuclease 1 (379 aa).

The tract at residues 1–105 is N-domain; the sequence is MGIKGLTKLL…QELAKRYSKR (105 aa). A Mg(2+)-binding site is contributed by aspartate 34. A DNA-binding site is contributed by arginine 71. Mg(2+) is bound by residues aspartate 87, glutamate 159, glutamate 161, aspartate 180, and aspartate 182. The I-domain stretch occupies residues 123 to 254; sequence AIEKLSKRTV…QTALKLIRQH (132 aa). Glutamate 159 is a DNA binding site. DNA is bound by residues glycine 232 and aspartate 234. Mg(2+) is bound at residue aspartate 234. Residues 331–379 form a disordered region; the sequence is AKNKSSQGRLESFFKPTATTSAPLKRKETSDKTSKAAANKKTKAGGKKK. The segment at 336–344 is interaction with PCNA; sequence SQGRLESFF. The segment covering 355 to 364 has biased composition (basic and acidic residues); that stretch reads KRKETSDKTS. Residues 368-379 are compositionally biased toward basic residues; that stretch reads ANKKTKAGGKKK.

Belongs to the XPG/RAD2 endonuclease family. FEN1 subfamily. In terms of assembly, interacts with PCNA. Three molecules of FEN1 bind to one PCNA trimer with each molecule binding to one PCNA monomer. PCNA stimulates the nuclease activity without altering cleavage specificity. Mg(2+) serves as cofactor. Phosphorylated. Phosphorylation upon DNA damage induces relocalization to the nuclear plasma.

Its subcellular location is the nucleus. The protein resides in the nucleolus. The protein localises to the nucleoplasm. It localises to the mitochondrion. Its function is as follows. Structure-specific nuclease with 5'-flap endonuclease and 5'-3' exonuclease activities involved in DNA replication and repair. During DNA replication, cleaves the 5'-overhanging flap structure that is generated by displacement synthesis when DNA polymerase encounters the 5'-end of a downstream Okazaki fragment. It enters the flap from the 5'-end and then tracks to cleave the flap base, leaving a nick for ligation. Also involved in the long patch base excision repair (LP-BER) pathway, by cleaving within the apurinic/apyrimidinic (AP) site-terminated flap. Acts as a genome stabilization factor that prevents flaps from equilibrating into structures that lead to duplications and deletions. Also possesses 5'-3' exonuclease activity on nicked or gapped double-stranded DNA, and exhibits RNase H activity. Also involved in replication and repair of rDNA and in repairing mitochondrial DNA. This Zea mays (Maize) protein is Flap endonuclease 1.